The chain runs to 156 residues: Dihydrofolate reductase (156 aa).

The 156-residue stretch at 1–156 (MLKLIWCQTL…VNYYSNKKEK (156 aa)) folds into the DHFR domain.

Belongs to the dihydrofolate reductase family.

It carries out the reaction (6S)-5,6,7,8-tetrahydrofolate + NADP(+) = 7,8-dihydrofolate + NADPH + H(+). Its pathway is cofactor biosynthesis; tetrahydrofolate biosynthesis; 5,6,7,8-tetrahydrofolate from 7,8-dihydrofolate: step 1/1. Key enzyme in folate metabolism. Catalyzes an essential reaction for de novo glycine and purine synthesis, and for DNA precursor synthesis. The sequence is that of Dihydrofolate reductase (folA) from Ureaplasma parvum serovar 3 (strain ATCC 700970).